A 765-amino-acid chain; its full sequence is Amyloid beta precursor like protein 2 (765 aa).

An N-terminal signal peptide occupies residues methionine 1–alanine 31. Over glycine 32–serine 695 the chain is Extracellular. The segment at alanine 46 to valine 139 is GFLD subdomain. One can recognise an E1 domain in the interval alanine 46–glutamine 205. 6 cysteine pairs are disulfide-bonded: cysteine 56–cysteine 80, cysteine 91–cysteine 133, cysteine 116–cysteine 123, cysteine 149–cysteine 203, cysteine 160–cysteine 190, and cysteine 174–cysteine 202. The tract at residues glutamate 147–glutamine 205 is cuBD subdomain. The Cu cation site is built by histidine 163, histidine 167, and tyrosine 184. The disordered stretch occupies residues serine 211–aspartate 301. The residue at position 216 (serine 216) is a Phosphoserine. Acidic residues-rich tracts occupy residues glutamate 218–tyrosine 231 and threonine 240–glutamate 271. Residues aspartate 272–aspartate 284 are compositionally biased toward basic and acidic residues. A BPTI/Kunitz inhibitor domain is found at valine 308–isoleucine 366. 3 cysteine pairs are disulfide-bonded: cysteine 312-cysteine 362, cysteine 321-cysteine 345, and cysteine 337-cysteine 358. Positions aspartate 375–leucine 566 constitute an E2 domain. Serine 592 carries the post-translational modification Phosphoserine. Residues glutamate 597–threonine 616 are disordered. Serine 628 carries an O-linked (Xyl...) (chondroitin sulfate) serine glycan. The helical transmembrane segment at alanine 696 to leucine 718 threads the bilayer. The Cytoplasmic portion of the chain corresponds to arginine 719–isoleucine 765. The tract at residues glycine 751 to isoleucine 765 is interaction with DAB2. The NPXY motif signature appears at tyrosine 752–tyrosine 757.

Belongs to the APP family. As to quaternary structure, interacts with CPEB1. Interacts (via NPXY motif) with DAB2 (via PID domain); the interaction is impaired by tyrosine phosphorylation of the NPXY motif. Interacts (via cytoplasmic domain) with APBB2/FE65L. Interacts (via intracellular domain) with APBB3/FE65L2.

Its subcellular location is the membrane. In terms of biological role, may play a role in the regulation of hemostasis. The soluble form may have inhibitory properties towards coagulation factors. May interact with cellular G-protein signaling pathways. May bind to the DNA 5'-GTCACATG-3'(CDEI box). Inhibits trypsin, chymotrypsin, plasmin, factor XIA and plasma and glandular kallikrein. Modulates the Cu/Zn nitric oxide-catalyzed autodegradation of GPC1 heparan sulfate side chains in fibroblasts. The protein is Amyloid beta precursor like protein 2 of Rattus norvegicus (Rat).